The following is a 181-amino-acid chain: Salmonella anti-inflammatory response activator (181 aa).

Residues 4-24 (FVYIYILVIYGSYLWFSLGGN) traverse the membrane as a helical segment.

In terms of assembly, interacts with host (human) STAT3.

The protein resides in the membrane. Its subcellular location is the host cytoplasm. Its function is as follows. A Salmonella strain-specific effector that induces a host STAT3-dependent anti-inflammatory pathway. In bacteria-infected host cells (human) leads to phosphorylation of host STAT3, at least on 'Tyr-705' and interleukin-10 (IL-10, IL10) production; expressing the gene alone in host cells induces STAT3 phosphorylation and IL-10 production. IL-10 production requires STAT3 in infected cells. Contributes to virulence in mouse infection models. Encoded in only a few S.typhimurium serovars, it may be a specific effector for adaptation to bovine hosts. In Salmonella typhimurium (strain 14028s / SGSC 2262), this protein is Salmonella anti-inflammatory response activator.